The chain runs to 108 residues: Large ribosomal subunit protein uL11 (108 aa).

The protein belongs to the universal ribosomal protein uL11 family. As to quaternary structure, part of the ribosomal stalk of the 50S ribosomal subunit. Interacts with L10 and the large rRNA to form the base of the stalk. L10 forms an elongated spine to which L12 dimers bind in a sequential fashion forming a multimeric L10(L12)X complex.

Its function is as follows. Forms part of the ribosomal stalk which helps the ribosome interact with GTP-bound translation factors. The sequence is that of Large ribosomal subunit protein uL11 (rpl11) from Aeropyrum pernix (strain ATCC 700893 / DSM 11879 / JCM 9820 / NBRC 100138 / K1).